Consider the following 483-residue polypeptide: Aspartyl/glutamyl-tRNA(Asn/Gln) amidotransferase subunit B (483 aa).

This sequence belongs to the GatB/GatE family. GatB subfamily. Heterotrimer of A, B and C subunits.

It carries out the reaction L-glutamyl-tRNA(Gln) + L-glutamine + ATP + H2O = L-glutaminyl-tRNA(Gln) + L-glutamate + ADP + phosphate + H(+). The catalysed reaction is L-aspartyl-tRNA(Asn) + L-glutamine + ATP + H2O = L-asparaginyl-tRNA(Asn) + L-glutamate + ADP + phosphate + 2 H(+). Its function is as follows. Allows the formation of correctly charged Asn-tRNA(Asn) or Gln-tRNA(Gln) through the transamidation of misacylated Asp-tRNA(Asn) or Glu-tRNA(Gln) in organisms which lack either or both of asparaginyl-tRNA or glutaminyl-tRNA synthetases. The reaction takes place in the presence of glutamine and ATP through an activated phospho-Asp-tRNA(Asn) or phospho-Glu-tRNA(Gln). The chain is Aspartyl/glutamyl-tRNA(Asn/Gln) amidotransferase subunit B from Brachyspira hyodysenteriae (strain ATCC 49526 / WA1).